The chain runs to 379 residues: Homoserine O-acetyltransferase (379 aa).

In terms of domain architecture, AB hydrolase-1 spans 52–356; that stretch reads NVVMVLHALT…IRGHDGFLVE (305 aa). The active-site Nucleophile is Ser-157. Position 227 (Arg-227) interacts with substrate. Catalysis depends on residues Asp-320 and His-350. Substrate is bound at residue Asp-351.

Belongs to the AB hydrolase superfamily. MetX family. As to quaternary structure, homodimer.

It is found in the cytoplasm. It carries out the reaction L-homoserine + acetyl-CoA = O-acetyl-L-homoserine + CoA. It participates in amino-acid biosynthesis; L-methionine biosynthesis via de novo pathway; O-acetyl-L-homoserine from L-homoserine: step 1/1. Its function is as follows. Transfers an acetyl group from acetyl-CoA to L-homoserine, forming acetyl-L-homoserine. The protein is Homoserine O-acetyltransferase of Mycobacterium marinum (strain ATCC BAA-535 / M).